We begin with the raw amino-acid sequence, 176 residues long: 2-C-methyl-D-erythritol 2,4-cyclodiphosphate synthase (176 aa).

Positions 23, 25, and 60 each coordinate a divalent metal cation. Asp23–His25 contacts 4-CDP-2-C-methyl-D-erythritol 2-phosphate. Thr149–Glu152 lines the 4-CDP-2-C-methyl-D-erythritol 2-phosphate pocket.

This sequence belongs to the IspF family. In terms of assembly, homotrimer. It depends on a divalent metal cation as a cofactor.

The catalysed reaction is 4-CDP-2-C-methyl-D-erythritol 2-phosphate = 2-C-methyl-D-erythritol 2,4-cyclic diphosphate + CMP. It participates in isoprenoid biosynthesis; isopentenyl diphosphate biosynthesis via DXP pathway; isopentenyl diphosphate from 1-deoxy-D-xylulose 5-phosphate: step 4/6. Functionally, involved in the biosynthesis of isopentenyl diphosphate (IPP) and dimethylallyl diphosphate (DMAPP), two major building blocks of isoprenoid compounds. Catalyzes the conversion of 4-diphosphocytidyl-2-C-methyl-D-erythritol 2-phosphate (CDP-ME2P) to 2-C-methyl-D-erythritol 2,4-cyclodiphosphate (ME-CPP) with a corresponding release of cytidine 5-monophosphate (CMP). This is 2-C-methyl-D-erythritol 2,4-cyclodiphosphate synthase from Chlamydia caviae (strain ATCC VR-813 / DSM 19441 / 03DC25 / GPIC) (Chlamydophila caviae).